The sequence spans 383 residues: 1-deoxy-D-xylulose 5-phosphate reductoisomerase (383 aa).

The NADPH site is built by Thr10, Gly11, Ser12, Ile13, Asn38, and Asn121. A 1-deoxy-D-xylulose 5-phosphate-binding site is contributed by Lys122. Position 123 (Glu123) interacts with NADPH. Position 147 (Asp147) interacts with Mn(2+). 1-deoxy-D-xylulose 5-phosphate is bound by residues Ser148, Glu149, Ser172, and His195. Glu149 is a Mn(2+) binding site. Gly201 is a binding site for NADPH. 1-deoxy-D-xylulose 5-phosphate-binding residues include Ser208, Asn213, Lys214, and Glu217. Position 217 (Glu217) interacts with Mn(2+).

The protein belongs to the DXR family. The cofactor is Mg(2+). It depends on Mn(2+) as a cofactor.

It carries out the reaction 2-C-methyl-D-erythritol 4-phosphate + NADP(+) = 1-deoxy-D-xylulose 5-phosphate + NADPH + H(+). It participates in isoprenoid biosynthesis; isopentenyl diphosphate biosynthesis via DXP pathway; isopentenyl diphosphate from 1-deoxy-D-xylulose 5-phosphate: step 1/6. Functionally, catalyzes the NADPH-dependent rearrangement and reduction of 1-deoxy-D-xylulose-5-phosphate (DXP) to 2-C-methyl-D-erythritol 4-phosphate (MEP). The protein is 1-deoxy-D-xylulose 5-phosphate reductoisomerase of Vesicomyosocius okutanii subsp. Calyptogena okutanii (strain HA).